Reading from the N-terminus, the 267-residue chain is Formamidopyrimidine-DNA glycosylase (267 aa).

Catalysis depends on Pro2, which acts as the Schiff-base intermediate with DNA. The active-site Proton donor is Glu3. Lys58 serves as the catalytic Proton donor; for beta-elimination activity. DNA-binding residues include His91, Arg110, and Arg152. The FPG-type zinc-finger motif lies at 233–267 (DVYGRGHGTCTSCGGALEAVRLGNRSTVFCPRCQQ). The active-site Proton donor; for delta-elimination activity is the Arg257.

Belongs to the FPG family. Monomer. Requires Zn(2+) as cofactor.

The catalysed reaction is Hydrolysis of DNA containing ring-opened 7-methylguanine residues, releasing 2,6-diamino-4-hydroxy-5-(N-methyl)formamidopyrimidine.. It carries out the reaction 2'-deoxyribonucleotide-(2'-deoxyribose 5'-phosphate)-2'-deoxyribonucleotide-DNA = a 3'-end 2'-deoxyribonucleotide-(2,3-dehydro-2,3-deoxyribose 5'-phosphate)-DNA + a 5'-end 5'-phospho-2'-deoxyribonucleoside-DNA + H(+). Involved in base excision repair of DNA damaged by oxidation or by mutagenic agents. Acts as a DNA glycosylase that recognizes and removes damaged bases. Has a preference for oxidized purines, such as 7,8-dihydro-8-oxoguanine (8-oxoG). Has AP (apurinic/apyrimidinic) lyase activity and introduces nicks in the DNA strand. Cleaves the DNA backbone by beta-delta elimination to generate a single-strand break at the site of the removed base with both 3'- and 5'-phosphates. This is Formamidopyrimidine-DNA glycosylase from Pelobacter propionicus (strain DSM 2379 / NBRC 103807 / OttBd1).